The sequence spans 766 residues: Cytoplasmic polyadenylation element-binding protein 3 (766 aa).

Disordered regions lie at residues methionine 1 to threonine 35, valine 131 to leucine 179, and proline 216 to arginine 299. Polar residues-rich tracts occupy residues glutamate 233–glutamine 256 and serine 276–asparagine 289. Positions isoleucine 310–glycine 332 constitute an RRM domain. Residues lysine 578–serine 602 form a disordered region. The segment covering leucine 589 to serine 602 has biased composition (low complexity).

In terms of biological role, cytoplasmic polyadenylation element binding protein that binds to and regulates the translation of specific mRNAs. This chain is Cytoplasmic polyadenylation element-binding protein 3 (cpb-3), found in Caenorhabditis remanei (Caenorhabditis vulgaris).